A 413-amino-acid polypeptide reads, in one-letter code: Putative F-box protein At3g23970 (413 aa).

One can recognise an F-box domain in the interval 1–42 (MNIPPELTFEVLVRLPLKSLARFRSVRKEWKLVIDSEFFRDC).

In Arabidopsis thaliana (Mouse-ear cress), this protein is Putative F-box protein At3g23970.